The primary structure comprises 763 residues: Endothelin-converting enzyme 2 (763 aa).

The Cytoplasmic segment spans residues 1–60; that stretch reads MNVALHELGGGGSMVEYKRAKLRDEESPEITVEGRATRDSLEVGFQKRTRQLFGSHTQLE. Ser27 carries the phosphoserine modification. A helical; Signal-anchor for type II membrane protein transmembrane segment spans residues 61 to 81; it reads LVLAGLILVLAALLLGCLVAL. Over 82–763 the chain is Lumenal; that stretch reads WVHRDPAHST…MNPGQLCEVW (682 aa). Residues 91-763 enclose the Peptidase M13 domain; sequence TCVTEACIRV…MNPGQLCEVW (673 aa). 5 disulfides stabilise this stretch: Cys92–Cys97, Cys115–Cys748, Cys123–Cys708, Cys179–Cys428, and Cys637–Cys760. Residues Asn159, Asn163, Asn204, Asn264, Asn309, Asn376, and Asn532 are each glycosylated (N-linked (GlcNAc...) asparagine). Position 600 (His600) interacts with Zn(2+). Glu601 is an active-site residue. A Zn(2+)-binding site is contributed by His604. Asn625 and Asn633 each carry an N-linked (GlcNAc...) asparagine glycan. Glu660 is a binding site for Zn(2+). The Proton donor role is filled by Asp664.

This sequence belongs to the peptidase M13 family. Requires Zn(2+) as cofactor.

Its subcellular location is the golgi apparatus membrane. It is found in the cytoplasmic vesicle. The protein localises to the secretory vesicle membrane. It catalyses the reaction Hydrolysis of the 21-Trp-|-Val-22 bond in big endothelin to form endothelin 1.. Functionally, converts big endothelin-1 to endothelin-1. Also involved in the processing of various neuroendocrine peptides, including neurotensin, angiotensin I, substance P, proenkephalin-derived peptides, and prodynorphin-derived peptides. May play a role in amyloid-beta processing. In Mus musculus (Mouse), this protein is Endothelin-converting enzyme 2.